We begin with the raw amino-acid sequence, 325 residues long: tRNA U34 carboxymethyltransferase (325 aa).

Carboxy-S-adenosyl-L-methionine is bound by residues K91, W105, K110, G130, 152–154, M196, Y200, and R315; that span reads DPS.

Belongs to the class I-like SAM-binding methyltransferase superfamily. CmoB family. Homotetramer.

The catalysed reaction is carboxy-S-adenosyl-L-methionine + 5-hydroxyuridine(34) in tRNA = 5-carboxymethoxyuridine(34) in tRNA + S-adenosyl-L-homocysteine + H(+). In terms of biological role, catalyzes carboxymethyl transfer from carboxy-S-adenosyl-L-methionine (Cx-SAM) to 5-hydroxyuridine (ho5U) to form 5-carboxymethoxyuridine (cmo5U) at position 34 in tRNAs. The polypeptide is tRNA U34 carboxymethyltransferase (Aeromonas salmonicida (strain A449)).